The primary structure comprises 86 residues: Cell division topological specificity factor (86 aa).

Belongs to the MinE family.

Functionally, prevents the cell division inhibition by proteins MinC and MinD at internal division sites while permitting inhibition at polar sites. This ensures cell division at the proper site by restricting the formation of a division septum at the midpoint of the long axis of the cell. This is Cell division topological specificity factor from Rhizobium etli (strain ATCC 51251 / DSM 11541 / JCM 21823 / NBRC 15573 / CFN 42).